The sequence spans 63 residues: Megourin-1 (63 aa).

As to quaternary structure, monomer. Post-translationally, contains four disulfide bonds.

It is found in the secreted. Its function is as follows. Has antimicrobial activity against Gram-positive bacteria and fungi. The chain is Megourin-1 from Megoura viciae (Vetch aphid).